A 329-amino-acid chain; its full sequence is Protein phosphatase 1 regulatory subunit 42 (329 aa).

7 LRR repeats span residues 30–51 (KLTH…SVCR), 52–73 (NLTV…GFAS), 74–95 (NLTH…SSLH), 96–117 (KLSK…EELK), 118–139 (SLKE…AFDP), 148–169 (TLCI…APLR), and 170–191 (KMTH…ETVF). An LRRCT domain is found at 205–243 (NPVCHKPKYRDRLITVCKFLDDLDGKQINELSRQFLINW). The disordered stretch occupies residues 268 to 329 (STSADFHLGP…SSTEWQSLKI (62 aa)). Positions 318-329 (GDSSTEWQSLKI) are enriched in polar residues.

The protein localises to the cytoplasm. It is found in the cytoskeleton. It localises to the microtubule organizing center. Its subcellular location is the centrosome. Functionally, may regulate phosphatase activity of protein phosphatase 1 (PP1) complexes. The sequence is that of Protein phosphatase 1 regulatory subunit 42 (ppp1r42) from Danio rerio (Zebrafish).